The following is a 168-amino-acid chain: T-cell surface glycoprotein CD3 delta chain (168 aa).

Residues 1-21 form the signal peptide; it reads MEHSRFLSCLILAALLSQVNP. Residues 22–102 lie on the Extracellular side of the membrane; sequence RILKVLEPED…CVELDTATLA (81 aa). A disulfide bond links Cys37 and Cys74. N-linked (GlcNAc...) asparagine glycosylation is found at Asn38 and Asn56. The helical transmembrane segment at 103 to 123 threads the bilayer; the sequence is GMIITDIIATVLLALGVYCFA. Residues 124 to 168 are Cytoplasmic-facing; it reads GHETGRFSRAADTQALMGNDQLYQPLRERNDAQYSRLGDKWARNK. The ITAM domain occupies 135 to 163; sequence DTQALMGNDQLYQPLRERNDAQYSRLGDK. 2 positions are modified to phosphotyrosine: Tyr146 and Tyr157.

In terms of assembly, the TCR-CD3 complex is composed of a CD3D/CD3E and a CD3G/CD3E heterodimers that preferentially associate with TCRalpha and TCRbeta, respectively, to form TCRalpha/CD3E/CD3G and TCRbeta/CD3G/CD3E trimers. In turn, the hexamer interacts with CD3Z homodimer to form the TCR-CD3 complex. Alternatively, TCRalpha and TCRbeta can be replaced by TCRgamma and TCRdelta. Interacts with coreceptors CD4 and CD8. Phosphorylated on Tyr residues after T-cell receptor triggering by LCK in association with CD4/CD8. As to expression, CD3D is mostly present on T-lymphocytes with its TCR-CD3 partners. Present also in fetal NK-cells.

The protein localises to the cell membrane. Part of the TCR-CD3 complex present on T-lymphocyte cell surface that plays an essential role in adaptive immune response. When antigen presenting cells (APCs) activate T-cell receptor (TCR), TCR-mediated signals are transmitted across the cell membrane by the CD3 chains CD3D, CD3E, CD3G and CD3Z. All CD3 chains contain immunoreceptor tyrosine-based activation motifs (ITAMs) in their cytoplasmic domain. Upon TCR engagement, these motifs become phosphorylated by Src family protein tyrosine kinases LCK and FYN, resulting in the activation of downstream signaling pathways. In addition of this role of signal transduction in T-cell activation, CD3D plays an essential role in thymocyte differentiation. Indeed, participates in correct intracellular TCR-CD3 complex assembly and surface expression. In absence of a functional TCR-CD3 complex, thymocytes are unable to differentiate properly. Interacts with CD4 and CD8 and thus serves to establish a functional link between the TCR and coreceptors CD4 and CD8, which is needed for activation and positive selection of CD4 or CD8 T-cells. The polypeptide is T-cell surface glycoprotein CD3 delta chain (CD3D) (Bos taurus (Bovine)).